A 420-amino-acid polypeptide reads, in one-letter code: MVSRQEQFEQVQAVKKSINTASEEVKNQVLLAMADHLVAATEEILAANALDMAAAKGKISDVMLDRLYLDADRIEAMARGIREVVALPDPIGEVLETSQLENGLVITKKRVAMGVIGIIYESRPNVTSDAAALTLKSGNAVVLRSGKDAYQTTHAIVTALKKGLETTTIHPNVIQLVEDTSRESSYAMMKAKGYLDLLIPRGGADLINAVVENAIVPVIETGTGIVHVYVDKDADDDKALSIINNAKTSRPSVCNAMEVLLVHEDKAASFLPRLEQVLVADRKEAGLEPIQFRLDSKASQFVSGQAAQAQDFDTEFLDYILAVKVVSSLEEAVAHIESHSTHHSDAIVTENAEAAAYFTDQVDSAAVYVNASTRFTDGGQFGLGCEMGISTQKLHARGPMGLKELTSYKYVVTGDGQIRE.

It belongs to the gamma-glutamyl phosphate reductase family.

Its subcellular location is the cytoplasm. It carries out the reaction L-glutamate 5-semialdehyde + phosphate + NADP(+) = L-glutamyl 5-phosphate + NADPH + H(+). It functions in the pathway amino-acid biosynthesis; L-proline biosynthesis; L-glutamate 5-semialdehyde from L-glutamate: step 2/2. Functionally, catalyzes the NADPH-dependent reduction of L-glutamate 5-phosphate into L-glutamate 5-semialdehyde and phosphate. The product spontaneously undergoes cyclization to form 1-pyrroline-5-carboxylate. This Streptococcus pneumoniae serotype 19F (strain G54) protein is Gamma-glutamyl phosphate reductase.